The sequence spans 429 residues: Endo-beta-1,4-galactanase (429 aa).

The signal sequence occupies residues 1–21 (MKSKVKMFFAAAIVWSACSST). 146 to 149 (DPAK) contributes to the substrate binding site. The active-site Proton donor is glutamate 194. Residues 233 to 234 (TN) and histidine 267 each bind substrate. Catalysis depends on glutamate 292, which acts as the Nucleophile. Threonine 296 contributes to the substrate binding site. Aspartate 301, aspartate 303, histidine 305, and asparagine 307 together coordinate Ca(2+). 2 residues coordinate substrate: lysine 311 and aspartate 388. Ca(2+) contacts are provided by serine 396 and aspartate 399.

The protein belongs to the glycosyl hydrolase 53 family. The cofactor is Ca(2+).

It localises to the secreted. It catalyses the reaction The enzyme specifically hydrolyzes (1-&gt;4)-beta-D-galactosidic linkages in type I arabinogalactans.. Involved in galactan degradation. Degrades arabinose-free galactan to galactooligosaccharides, producing galactotetraose as the main product along with galactotriose, galactobiose, and galactose. Is also able to degrade galactotetraose, galactotriose and galactobiose, suggesting an additional exo-mode of activity. May hydrolyze the beta-1,4-galactan linkages of the galactan portion of arabinogalactan type I, a pectic plant polysaccharide from which most of the arabinose has been removed. This Bacillus subtilis (strain 168) protein is Endo-beta-1,4-galactanase.